The primary structure comprises 511 residues: Ribose import ATP-binding protein RbsA (511 aa).

ABC transporter domains lie at 13–249 (VSMD…VGRA) and 260–503 (ALGE…AGIA). 45–52 (GENGAGKS) serves as a coordination point for ATP.

The protein belongs to the ABC transporter superfamily. Ribose importer (TC 3.A.1.2.1) family. The complex is composed of an ATP-binding protein (RbsA), two transmembrane proteins (RbsC) and a solute-binding protein (RbsB).

It localises to the cell inner membrane. The catalysed reaction is D-ribose(out) + ATP + H2O = D-ribose(in) + ADP + phosphate + H(+). Functionally, part of the ABC transporter complex RbsABC involved in ribose import. Responsible for energy coupling to the transport system. This is Ribose import ATP-binding protein RbsA from Roseobacter denitrificans (strain ATCC 33942 / OCh 114) (Erythrobacter sp. (strain OCh 114)).